We begin with the raw amino-acid sequence, 84 residues long: Cell division topological specificity factor (84 aa).

The protein belongs to the MinE family.

Functionally, prevents the cell division inhibition by proteins MinC and MinD at internal division sites while permitting inhibition at polar sites. This ensures cell division at the proper site by restricting the formation of a division septum at the midpoint of the long axis of the cell. This Granulibacter bethesdensis (strain ATCC BAA-1260 / CGDNIH1) protein is Cell division topological specificity factor.